A 356-amino-acid polypeptide reads, in one-letter code: Replication factor C subunit 3 (356 aa).

An N6-acetyllysine modification is found at K20. Residue S125 is modified to Phosphoserine.

The protein belongs to the activator 1 small subunits family. In terms of assembly, subunit of the RFC complex, an heteropentameric complex consisting of a large subunit RFC1 and four small subunits RFC2, RFC3, RFC4 and RFC5; the RFC complex interacts with PCNA. Forms an heterotetrameric complex with RFC2, RFC4 and RFC5; this complex has ATPase activity but is not stimulated by PCNA. The heterotetramer of subunits RFC2, RFC3, RFC4 and RFC5 interacts with RAD17. Interacts with CNTD1; this interaction facilitates crossover formation.

It is found in the nucleus. In terms of biological role, subunit of the replication factor C (RFC) complex which acts during elongation of primed DNA templates by DNA polymerases delta and epsilon, and is necessary for ATP-dependent loading of proliferating cell nuclear antigen (PCNA) onto primed DNA. This is Replication factor C subunit 3 (RFC3) from Bos taurus (Bovine).